Here is a 209-residue protein sequence, read N- to C-terminus: Ribosomal RNA large subunit methyltransferase E (209 aa).

Glycine 63, tryptophan 65, aspartate 83, aspartate 99, and aspartate 124 together coordinate S-adenosyl-L-methionine. The active-site Proton acceptor is the lysine 164.

The protein belongs to the class I-like SAM-binding methyltransferase superfamily. RNA methyltransferase RlmE family.

The protein localises to the cytoplasm. The catalysed reaction is uridine(2552) in 23S rRNA + S-adenosyl-L-methionine = 2'-O-methyluridine(2552) in 23S rRNA + S-adenosyl-L-homocysteine + H(+). In terms of biological role, specifically methylates the uridine in position 2552 of 23S rRNA at the 2'-O position of the ribose in the fully assembled 50S ribosomal subunit. The protein is Ribosomal RNA large subunit methyltransferase E of Vibrio parahaemolyticus serotype O3:K6 (strain RIMD 2210633).